We begin with the raw amino-acid sequence, 423 residues long: Serine--tRNA ligase (423 aa).

231–233 (TAE) serves as a coordination point for L-serine. Residue 262-264 (RSE) participates in ATP binding. Residue Glu285 coordinates L-serine. 349–352 (EISS) contacts ATP. Ser384 is an L-serine binding site.

This sequence belongs to the class-II aminoacyl-tRNA synthetase family. Type-1 seryl-tRNA synthetase subfamily. In terms of assembly, homodimer. The tRNA molecule binds across the dimer.

Its subcellular location is the cytoplasm. It carries out the reaction tRNA(Ser) + L-serine + ATP = L-seryl-tRNA(Ser) + AMP + diphosphate + H(+). It catalyses the reaction tRNA(Sec) + L-serine + ATP = L-seryl-tRNA(Sec) + AMP + diphosphate + H(+). It functions in the pathway aminoacyl-tRNA biosynthesis; selenocysteinyl-tRNA(Sec) biosynthesis; L-seryl-tRNA(Sec) from L-serine and tRNA(Sec): step 1/1. In terms of biological role, catalyzes the attachment of serine to tRNA(Ser). Is also able to aminoacylate tRNA(Sec) with serine, to form the misacylated tRNA L-seryl-tRNA(Sec), which will be further converted into selenocysteinyl-tRNA(Sec). The chain is Serine--tRNA ligase from Lactococcus lactis subsp. cremoris (strain MG1363).